A 113-amino-acid polypeptide reads, in one-letter code: ATP-dependent Clp protease adapter protein ClpS (113 aa).

Positions 1–11 (MTRPTIPPGPP) are enriched in pro residues. 2 disordered regions span residues 1–24 (MTRP…ERTE) and 92–113 (TAHA…SEGE).

It belongs to the ClpS family. As to quaternary structure, binds to the N-terminal domain of the chaperone ClpA.

Functionally, involved in the modulation of the specificity of the ClpAP-mediated ATP-dependent protein degradation. The polypeptide is ATP-dependent Clp protease adapter protein ClpS (Deinococcus radiodurans (strain ATCC 13939 / DSM 20539 / JCM 16871 / CCUG 27074 / LMG 4051 / NBRC 15346 / NCIMB 9279 / VKM B-1422 / R1)).